Consider the following 440-residue polypeptide: UPF0489 protein C5orf22 homolog (440 aa).

The segment at valine 187–methionine 207 is disordered. Over residues glutamate 188 to glutamate 200 the composition is skewed to low complexity.

Belongs to the UPF0489 family.

The chain is UPF0489 protein C5orf22 homolog from Xenopus tropicalis (Western clawed frog).